The chain runs to 193 residues: MSRYVEKVRETKETKVQVKLELDGEGKVEIRTPVPFFDHMLHSMLFYMKVNATILGEDKQGYDDHHIVEDVGITLGQAIKDALGDRRGIKRFSSAVIPMDEALVLVAVDVSGRGYASTNLDLKREKIGDLSTENVAHFFWSLATNAGITLHVRKLDGVNEHHIVEAAFKGVGLALGEACSIQGEGIRSTKGSL.

The protein belongs to the imidazoleglycerol-phosphate dehydratase family.

Its subcellular location is the cytoplasm. It catalyses the reaction D-erythro-1-(imidazol-4-yl)glycerol 3-phosphate = 3-(imidazol-4-yl)-2-oxopropyl phosphate + H2O. It functions in the pathway amino-acid biosynthesis; L-histidine biosynthesis; L-histidine from 5-phospho-alpha-D-ribose 1-diphosphate: step 6/9. The sequence is that of Imidazoleglycerol-phosphate dehydratase from Metallosphaera sedula (strain ATCC 51363 / DSM 5348 / JCM 9185 / NBRC 15509 / TH2).